The chain runs to 324 residues: Bis(5'-nucleosyl)-tetraphosphatase, symmetrical (324 aa).

Positions 269–324 (PGREVTAPATAPRAPRRPRERQGRQRARGGRGGGNGNGNGGNAAAPAAAPGDAPQE) are disordered. Residues 282 to 297 (APRRPRERQGRQRARG) are compositionally biased toward basic residues. Residues 298-309 (GRGGGNGNGNGG) are compositionally biased toward gly residues. Positions 310–324 (NAAAPAAAPGDAPQE) are enriched in low complexity.

This sequence belongs to the Ap4A hydrolase family.

It catalyses the reaction P(1),P(4)-bis(5'-adenosyl) tetraphosphate + H2O = 2 ADP + 2 H(+). Functionally, hydrolyzes diadenosine 5',5'''-P1,P4-tetraphosphate to yield ADP. The chain is Bis(5'-nucleosyl)-tetraphosphatase, symmetrical from Xanthomonas campestris pv. campestris (strain ATCC 33913 / DSM 3586 / NCPPB 528 / LMG 568 / P 25).